A 205-amino-acid polypeptide reads, in one-letter code: Thymidylate kinase (205 aa).

An ATP-binding site is contributed by 11 to 18 (GVEGAGKS).

The protein belongs to the thymidylate kinase family.

It carries out the reaction dTMP + ATP = dTDP + ADP. Functionally, phosphorylation of dTMP to form dTDP in both de novo and salvage pathways of dTTP synthesis. This Vesicomyosocius okutanii subsp. Calyptogena okutanii (strain HA) protein is Thymidylate kinase.